The following is a 106-amino-acid chain: Urease subunit beta (106 aa).

This sequence belongs to the urease beta subunit family. In terms of assembly, heterotrimer of UreA (gamma), UreB (beta) and UreC (alpha) subunits. Three heterotrimers associate to form the active enzyme.

It localises to the cytoplasm. It carries out the reaction urea + 2 H2O + H(+) = hydrogencarbonate + 2 NH4(+). The protein operates within nitrogen metabolism; urea degradation; CO(2) and NH(3) from urea (urease route): step 1/1. The polypeptide is Urease subunit beta (Prochlorococcus marinus (strain AS9601)).